The chain runs to 355 residues: UDP-3-O-acylglucosamine N-acyltransferase (355 aa).

Histidine 258 acts as the Proton acceptor in catalysis.

This sequence belongs to the transferase hexapeptide repeat family. LpxD subfamily. As to quaternary structure, homotrimer.

It catalyses the reaction a UDP-3-O-[(3R)-3-hydroxyacyl]-alpha-D-glucosamine + a (3R)-hydroxyacyl-[ACP] = a UDP-2-N,3-O-bis[(3R)-3-hydroxyacyl]-alpha-D-glucosamine + holo-[ACP] + H(+). It functions in the pathway bacterial outer membrane biogenesis; LPS lipid A biosynthesis. Catalyzes the N-acylation of UDP-3-O-acylglucosamine using 3-hydroxyacyl-ACP as the acyl donor. Is involved in the biosynthesis of lipid A, a phosphorylated glycolipid that anchors the lipopolysaccharide to the outer membrane of the cell. The sequence is that of UDP-3-O-acylglucosamine N-acyltransferase from Bradyrhizobium sp. (strain BTAi1 / ATCC BAA-1182).